A 111-amino-acid chain; its full sequence is Nucleoid-associated protein Clim_0875 (111 aa).

The protein belongs to the YbaB/EbfC family. As to quaternary structure, homodimer.

It is found in the cytoplasm. It localises to the nucleoid. Binds to DNA and alters its conformation. May be involved in regulation of gene expression, nucleoid organization and DNA protection. The chain is Nucleoid-associated protein Clim_0875 from Chlorobium limicola (strain DSM 245 / NBRC 103803 / 6330).